The sequence spans 314 residues: Olfactory receptor 9Q2 (314 aa).

The Extracellular segment spans residues 1 to 25 (MAERNYTVVTEFFLTAFTEHLQWRV). N-linked (GlcNAc...) asparagine glycosylation occurs at Asn5. Residues 26-46 (PLFLIFLSFYLATMLGNTGMI) traverse the membrane as a helical segment. The Cytoplasmic portion of the chain corresponds to 47 to 54 (LLIRGDRR). A helical transmembrane segment spans residues 55–75 (LHTPMYFFLSHLSLVDICYSS). Residues 76–99 (AIIPQMLAVLWEHGTTISQARCAA) lie on the Extracellular side of the membrane. Cys97 and Cys189 are oxidised to a cystine. Residues 100–120 (QFFLFTFFASIDCYLLAIMAY) traverse the membrane as a helical segment. Residues 121-139 (DRYTAVCQPLLYVTIITEK) are Cytoplasmic-facing. A helical transmembrane segment spans residues 140-160 (ARWGLVTGAYVAGFFSAFVRT). Over 161 to 197 (VTAFTLSFCGNNEINFIFCDLPPLLKLSCGDSYTQEV) the chain is Extracellular. A helical membrane pass occupies residues 198–217 (VIIVFALFVMPACILVILVS). The Cytoplasmic segment spans residues 218–237 (YLFIIVAILQIHSAGGRAKT). A helical transmembrane segment spans residues 238–258 (FSTCASHLTAVALFFGTLIFM). Residues 259–271 (YLRDNTGQSSEGD) are Extracellular-facing. The chain crosses the membrane as a helical span at residues 272-292 (RVVSVLYTVVTPMLNPLIYSL). Topologically, residues 293–314 (RNKEVKEATRKALSKSKPARRP) are cytoplasmic.

It belongs to the G-protein coupled receptor 1 family.

The protein localises to the cell membrane. In terms of biological role, odorant receptor. The sequence is that of Olfactory receptor 9Q2 (OR9Q2) from Homo sapiens (Human).